The primary structure comprises 309 residues: Dicarboxylate carrier UCP2 (309 aa).

Topologically, residues 1–16 (MVGFKATDVPPTATVK) are mitochondrial intermembrane. 3 Solcar repeats span residues 11 to 106 (PTAT…VKQF), 114 to 203 (ASIG…IKDA), and 212 to 297 (DDLP…LKRA). The segment at 16 to 63 (KFLGAGTAACIADLITFPLDTAKVRLQIQGESQGPVHATASAQYRGVM) is important for interaction with long-chain fatty acids. Residues 17–40 (FLGAGTAACIADLITFPLDTAKVR) traverse the membrane as a helical segment. Residues 41–77 (LQIQGESQGPVHATASAQYRGVMGTILTMVRTEGPRS) are Mitochondrial matrix-facing. The chain crosses the membrane as a helical span at residues 78 to 103 (LYNGLVAGLQRQMSFASVRIGLYDSV). The Mitochondrial intermembrane segment spans residues 104–119 (KQFYTKGSEHASIGSR). The helical transmembrane segment at 120–145 (LLAGSTTGALAVAVAQPTDVVKVRFQ) threads the bilayer. At 146 to 173 (AQARAGGGRRYQSTVNAYKTIAREEGFR) the chain is on the mitochondrial matrix side. Residues 174–199 (GLWKGTSPNVARNAIVNCAELVTYDL) traverse the membrane as a helical segment. Over 200 to 217 (IKDALLKANLMTDDLPCH) the chain is Mitochondrial intermembrane. Residues 218–242 (FTSAFGAGFCTTVIASPVDVVKTRY) form a helical membrane-spanning segment. The Mitochondrial matrix segment spans residues 243-268 (MNSALGQYSSAGHCALTMLQKEGPRA). Residues 269 to 294 (FYKGFMPSFLRLGSWNVVMFVTYEQL) traverse the membrane as a helical segment. Residues 278–285 (LRLGSWNV) form an important for interaction with long-chain fatty acids region. Residues 295–309 (KRALMAACTSREAPF) are Mitochondrial intermembrane-facing.

The protein belongs to the mitochondrial carrier (TC 2.A.29) family. In terms of assembly, homotetramer. Adopts an asymmetrical dimer of dimers functional form. Interacts with MICU1 (when methylated); leading to decrease the calcium sensitivity of MICU1.

Its subcellular location is the mitochondrion inner membrane. It carries out the reaction L-aspartate(out) + phosphate(in) + H(+)(in) = L-aspartate(in) + phosphate(out) + H(+)(out). The enzyme catalyses oxaloacetate(out) + phosphate(in) + H(+)(in) = oxaloacetate(in) + phosphate(out) + H(+)(out). It catalyses the reaction (S)-malate(out) + phosphate(in) + H(+)(in) = (S)-malate(in) + phosphate(out) + H(+)(out). The catalysed reaction is malonate(out) + phosphate(in) + H(+)(in) = malonate(in) + phosphate(out) + H(+)(out). It carries out the reaction sulfate(out) + phosphate(in) + H(+)(in) = sulfate(in) + phosphate(out) + H(+)(out). The enzyme catalyses (S)-malate(out) = (S)-malate(in). It catalyses the reaction L-aspartate(out) = L-aspartate(in). The catalysed reaction is phosphate(in) = phosphate(out). It carries out the reaction chloride(in) = chloride(out). The enzyme catalyses H(+)(in) = H(+)(out). It catalyses the reaction a long-chain fatty acid(out) = a long-chain fatty acid(in). Antiporter that exports dicarboxylate intermediates of the Krebs cycle in exchange for phosphate plus a proton across the inner membrane of mitochondria, a process driven by mitochondrial motive force with an overall impact on glycolysis, glutaminolysis and glutathione-dependent redox balance. Continuous export of oxaloacetate and related four-carbon dicarboxylates from mitochondrial matrix into the cytosol negatively regulates the oxidation of acetyl-CoA substrates via the Krebs cycle lowering the ATP/ADP ratio and reactive oxygen species (ROS) production. May mediate inducible proton entry into the mitochondrial matrix affecting ATP turnover as a protection mechanism against oxidative stress. The proton currents are most likely associated with fatty acid flipping across the inner membrane of mitochondria in a metabolic process regulated by free fatty acids and purine nucleotides. Regulates the use of glucose as a source of energy. Required for glucose-induced DRP1-dependent mitochondrial fission and neuron activation in the ventromedial nucleus of the hypothalamus (VMH). This mitochondrial adaptation mechanism modulates the VMH pool of glucose-excited neurons with an impact on systemic glucose homeostasis. Regulates ROS levels and metabolic reprogramming of macrophages during the resolution phase of inflammation. Attenuates ROS production in response to IL33 to preserve the integrity of the Krebs cycle required for persistent production of itaconate and subsequent GATA3-dependent differentiation of inflammation-resolving alternatively activated macrophages. Can unidirectionally transport anions including L-malate, L-aspartate, phosphate and chloride ions. Does not mediate adaptive thermogenesis. The sequence is that of Dicarboxylate carrier UCP2 (UCP2) from Pongo abelii (Sumatran orangutan).